Here is a 302-residue protein sequence, read N- to C-terminus: Sulfate adenylyltransferase subunit 2 (302 aa).

The interval 279 to 302 (ERQGRAIDHDSSGSMELKKRQGYF) is disordered. Basic and acidic residues predominate over residues 280 to 302 (RQGRAIDHDSSGSMELKKRQGYF).

This sequence belongs to the PAPS reductase family. CysD subfamily. Heterodimer composed of CysD, the smaller subunit, and CysN.

The enzyme catalyses sulfate + ATP + H(+) = adenosine 5'-phosphosulfate + diphosphate. Its pathway is sulfur metabolism; hydrogen sulfide biosynthesis; sulfite from sulfate: step 1/3. In terms of biological role, with CysN forms the ATP sulfurylase (ATPS) that catalyzes the adenylation of sulfate producing adenosine 5'-phosphosulfate (APS) and diphosphate, the first enzymatic step in sulfur assimilation pathway. APS synthesis involves the formation of a high-energy phosphoric-sulfuric acid anhydride bond driven by GTP hydrolysis by CysN coupled to ATP hydrolysis by CysD. This chain is Sulfate adenylyltransferase subunit 2, found in Aliivibrio fischeri (strain ATCC 700601 / ES114) (Vibrio fischeri).